A 151-amino-acid chain; its full sequence is Ribosome maturation factor RimP (151 aa).

Belongs to the RimP family.

It is found in the cytoplasm. Required for maturation of 30S ribosomal subunits. The polypeptide is Ribosome maturation factor RimP (Alcanivorax borkumensis (strain ATCC 700651 / DSM 11573 / NCIMB 13689 / SK2)).